Here is a 169-residue protein sequence, read N- to C-terminus: Ribosome maturation factor RimM (169 aa).

The 75-residue stretch at 94–168 (EEGQYYYHQI…KVIVELLEGL (75 aa)) folds into the PRC barrel domain.

It belongs to the RimM family. In terms of assembly, binds ribosomal protein uS19.

The protein localises to the cytoplasm. Its function is as follows. An accessory protein needed during the final step in the assembly of 30S ribosomal subunit, possibly for assembly of the head region. Essential for efficient processing of 16S rRNA. May be needed both before and after RbfA during the maturation of 16S rRNA. It has affinity for free ribosomal 30S subunits but not for 70S ribosomes. In Limosilactobacillus fermentum (strain NBRC 3956 / LMG 18251) (Lactobacillus fermentum), this protein is Ribosome maturation factor RimM.